Reading from the N-terminus, the 388-residue chain is Quinolone resistance protein NorA (388 aa).

The next 12 membrane-spanning stretches (helical) occupy residues 5 to 25, 42 to 62, 69 to 89, 99 to 119, 129 to 149, 157 to 177, 201 to 221, 239 to 259, 269 to 289, 293 to 313, 331 to 351, and 355 to 375; these read IFVLYFNIFLIFLGIGLVIPV, LLVAAFALSQMIISPFGGTLA, LIICIGLILFSVSEFMFAVGH, VIGGMSAGMVMPGVTGLIADI, FGYMSAIINSGFILGPGIGGF, MPFYFAGALGILAFIMSIVLI, WKVFITPVILTLVLSFGLSAF, DISIAITGGGIFGALFQIYFF, LTFIAWSLLYSVVVLILLVFA, WSIMLISFVVFIGFDMIRPAI, LNSTFTSMGNFIGPLIAGALF, and IEAPIYMAIGVSLAGVVIVLI.

This sequence belongs to the major facilitator superfamily. TCR/Tet family.

It localises to the cell membrane. Its function is as follows. Involved in quinolone resistance. May constitute a membrane-associated active efflux pump of hydrophilic quinolones. The sequence is that of Quinolone resistance protein NorA (norA) from Staphylococcus aureus (strain Mu50 / ATCC 700699).